Reading from the N-terminus, the 341-residue chain is D-erythrose-4-phosphate dehydrogenase (341 aa).

12–13 (RI) contacts NAD(+). Substrate contacts are provided by residues 154–156 (SCT), R200, 213–214 (TK), and R236. The active-site Nucleophile is the C155. N318 contributes to the NAD(+) binding site.

This sequence belongs to the glyceraldehyde-3-phosphate dehydrogenase family. Epd subfamily. Homotetramer.

Its subcellular location is the cytoplasm. It carries out the reaction D-erythrose 4-phosphate + NAD(+) + H2O = 4-phospho-D-erythronate + NADH + 2 H(+). The protein operates within cofactor biosynthesis; pyridoxine 5'-phosphate biosynthesis; pyridoxine 5'-phosphate from D-erythrose 4-phosphate: step 1/5. Its function is as follows. Catalyzes the NAD-dependent conversion of D-erythrose 4-phosphate to 4-phosphoerythronate. In Edwardsiella ictaluri (strain 93-146), this protein is D-erythrose-4-phosphate dehydrogenase.